We begin with the raw amino-acid sequence, 342 residues long: Thioredoxin reductase 2, mitochondrial (342 aa).

Residues 1–23 (MIKHIVSPFRTNFVGISKSVLSR) constitute a mitochondrion transit peptide. Residues 34–37 (SGPA), 56–68 (EGMMANGIAAGGQ), 63–64 (IA), Gln68, Asn77, Val110, Cys168, Asp311, 311–320 (DVQDSRYRQA), and 318–320 (RQA) contribute to the FAD site. Cys165 and Cys168 are oxidised to a cystine.

It belongs to the class-II pyridine nucleotide-disulfide oxidoreductase family. In terms of assembly, homodimer. It depends on FAD as a cofactor.

It localises to the mitochondrion. It carries out the reaction [thioredoxin]-dithiol + NADP(+) = [thioredoxin]-disulfide + NADPH + H(+). Its function is as follows. Acts on mitochondrial thioredoxin 3. Implicated in the defense against oxidative stress. The chain is Thioredoxin reductase 2, mitochondrial from Saccharomyces cerevisiae (strain ATCC 204508 / S288c) (Baker's yeast).